A 624-amino-acid polypeptide reads, in one-letter code: Carbon monoxide dehydrogenase (624 aa).

5 residues coordinate [4Fe-4S] cluster: Cys37, Cys46, Cys49, Cys54, and Cys65. Residues His256, Cys292, Cys336, Cys444, Cys475, and Cys516 each contribute to the [Ni-4Fe-5S] cluster site.

The protein belongs to the Ni-containing carbon monoxide dehydrogenase family. In terms of assembly, homodimer. The cofactor is [4Fe-4S] cluster. [Ni-4Fe-5S] cluster is required as a cofactor.

It catalyses the reaction CO + 2 oxidized [2Fe-2S]-[ferredoxin] + H2O = 2 reduced [2Fe-2S]-[ferredoxin] + CO2 + 2 H(+). Its function is as follows. CODH oxidizes carbon monoxide coupled, via CooF, to the reduction of a hydrogen cation by a hydrogenase (possibly CooH). The protein is Carbon monoxide dehydrogenase (cooS) of Methanocaldococcus jannaschii (strain ATCC 43067 / DSM 2661 / JAL-1 / JCM 10045 / NBRC 100440) (Methanococcus jannaschii).